Here is a 1123-residue protein sequence, read N- to C-terminus: Eukaryotic translation initiation factor 2-alpha kinase PK4 (1123 aa).

The tract at residues 1-30 (MKKRIRSSYKVGSSNKYHKKNYTDNEKDKK) is disordered. Over residues 21 to 30 (NYTDNEKDKK) the composition is skewed to basic and acidic residues. ATP is bound by residues 245–253 (IGQGGFGSV) and lysine 270. 3 disordered regions span residues 409–493 (FYSD…NDEG), 572–609 (RNEDDKNGLDGDKNGLDGDKNGLDGDKNGLDGDKNELD), and 742–800 (ENDD…DDDI). Basic and acidic residues predominate over residues 419-428 (KNKENPEKNH). The segment covering 455-477 (HKLKKRKNKKKKSKKKRKSKSKI) has biased composition (basic residues). Repeat copies occupy residues 576 to 582 (DKNGLDG), 583 to 589 (DKNGLDG), 590 to 596 (DKNGLDG), 597 to 603 (DKNGLDG), and 604 to 610 (DKNELDD). The segment at 576–610 (DKNGLDGDKNGLDGDKNGLDGDKNGLDGDKNELDD) is 5 X 7 AA tandem repeat of D-K-N-[GE]-L-D-[GD]. A Protein kinase domain is found at 678 to 1049 (TNVESINTNG…KIKVLLDPHL (372 aa)). Residues 743–754 (NDDDDDDDDDDN) show a composition bias toward acidic residues. The active-site Proton acceptor is aspartate 886. Threonine 953 carries the phosphothreonine modification.

This sequence belongs to the protein kinase superfamily. Ser/Thr protein kinase family. GCN2 subfamily. In terms of assembly, may form oligomers in response to stress; oligomerization may result in catalytic activity. Interacts with BIP; the interaction is disrupted in response to stress. In terms of processing, auto-phosphorylated.

The protein resides in the endoplasmic reticulum membrane. The enzyme catalyses L-seryl-[protein] + ATP = O-phospho-L-seryl-[protein] + ADP + H(+). It catalyses the reaction L-threonyl-[protein] + ATP = O-phospho-L-threonyl-[protein] + ADP + H(+). With respect to regulation, dissociation from BIP and oligomerization, may results autophosphorylation and kinase activity induction. Functionally, during the asexual blood stage, phosphorylates translation factor eIF2alpha in late schizonts resulting in protein translation inhibition. Plays a role in trophozoite differentiation into schizonts. The polypeptide is Eukaryotic translation initiation factor 2-alpha kinase PK4 (Plasmodium falciparum).